We begin with the raw amino-acid sequence, 107 residues long: MEQFQHISVTDAQEKLNQKDHNARMVDIRDPQSFGRGHVDGAFHLTNDTIVTLMNEVEFEQPVLVMCYHGHSSQGAAQYLINQGYEEVYSVDGGFEGWNKAGLPVEK.

In terms of domain architecture, Rhodanese spans 19 to 107; sequence KDHNARMVDI…WNKAGLPVEK (89 aa). Residue Cys-67 is the Cysteine persulfide intermediate of the active site.

It belongs to the GlpE family.

It localises to the cytoplasm. The catalysed reaction is thiosulfate + hydrogen cyanide = thiocyanate + sulfite + 2 H(+). It carries out the reaction thiosulfate + [thioredoxin]-dithiol = [thioredoxin]-disulfide + hydrogen sulfide + sulfite + 2 H(+). Its function is as follows. Transferase that catalyzes the transfer of sulfur from thiosulfate to thiophilic acceptors such as cyanide or dithiols. May function in a CysM-independent thiosulfate assimilation pathway by catalyzing the conversion of thiosulfate to sulfite, which can then be used for L-cysteine biosynthesis. The sequence is that of Thiosulfate sulfurtransferase GlpE from Aliivibrio salmonicida (strain LFI1238) (Vibrio salmonicida (strain LFI1238)).